The following is a 293-amino-acid chain: uncharacterized protein (293 aa).

Disordered regions lie at residues Met1–Ala95 and Glu268–Leu293. Ser34, Ser35, and Ser89 each carry phosphoserine. Basic and acidic residues-rich tracts occupy residues Lys85–Ala95 and Gly277–Thr286.

This is an uncharacterized protein from Rattus norvegicus (Rat).